A 432-amino-acid chain; its full sequence is Cyclin-A2 (432 aa).

An N-acetylmethionine modification is found at M1. Residue S5 is modified to Phosphoserine. Disordered stretches follow at residues 26–45 and 55–75; these read LQED…QQPR and SGNP…VAPL. At S55 the chain carries Phosphoserine.

It belongs to the cyclin family. Cyclin AB subfamily. Interacts with the CDK1 and CDK2 protein kinases to form serine/threonine kinase holoenzyme complexes. Interacts with CDK1 (hyperphosphorylated form in G1 and underphosphorylated forms in S and G2). Interacts with CDK2; the interaction increases from G1 to G2. Interacts (associated with CDK2 but not with CDK1) with SCAPER; regulates the activity of CCNA2/CDK2 by transiently maintaining CCNA2 in the cytoplasm. Forms a ternary complex with CDK2 and CDKN1B; CDKN1B inhibits the kinase activity of CDK2 through conformational rearrangements. Interacts with INCA1. As to quaternary structure, (Microbial infection) Interacts with human cytomegalovirus protein UL32. Post-translationally, polyubiquitinated via 'Lys-11'-linked ubiquitin by the anaphase-promoting complex (APC/C), leading to its degradation by the proteasome. Deubiquitinated and stabilized by USP37 enables entry into S phase. Ubiquitinated during the G1 phase by the SCF(FBXO31) complex, leading to its proteasomal degradation.

Its subcellular location is the nucleus. It localises to the cytoplasm. Functionally, cyclin which controls both the G1/S and the G2/M transition phases of the cell cycle. Functions through the formation of specific serine/threonine protein kinase holoenzyme complexes with the cyclin-dependent protein kinases CDK1 or CDK2. The cyclin subunit confers the substrate specificity of these complexes and differentially interacts with and activates CDK1 and CDK2 throughout the cell cycle. The sequence is that of Cyclin-A2 from Homo sapiens (Human).